Here is a 142-residue protein sequence, read N- to C-terminus: Small ribosomal subunit protein bS16 (142 aa).

The disordered stretch occupies residues 88 to 142 (GAEGTLRQPEGKTPFVAPDNGSVIIPEAITPKAEKAEEAPAEDAAPAEDDAEKAE). Positions 126-142 (APAEDAAPAEDDAEKAE) are enriched in acidic residues.

It belongs to the bacterial ribosomal protein bS16 family.

In Kocuria rhizophila (strain ATCC 9341 / DSM 348 / NBRC 103217 / DC2201), this protein is Small ribosomal subunit protein bS16.